We begin with the raw amino-acid sequence, 700 residues long: Elongation factor G (700 aa).

The 277-residue stretch at 10-286 folds into the tr-type G domain; sequence NKVRNIGIMA…AVIDYLPNPL (277 aa). Residues 19–26, 83–87, and 137–140 contribute to the GTP site; these read AHIDAGKT, DTPGH, and NKMD.

The protein belongs to the TRAFAC class translation factor GTPase superfamily. Classic translation factor GTPase family. EF-G/EF-2 subfamily.

The protein localises to the cytoplasm. Catalyzes the GTP-dependent ribosomal translocation step during translation elongation. During this step, the ribosome changes from the pre-translocational (PRE) to the post-translocational (POST) state as the newly formed A-site-bound peptidyl-tRNA and P-site-bound deacylated tRNA move to the P and E sites, respectively. Catalyzes the coordinated movement of the two tRNA molecules, the mRNA and conformational changes in the ribosome. The sequence is that of Elongation factor G from Rhodococcus jostii (strain RHA1).